The following is a 1213-amino-acid chain: DNA-directed RNA polymerase subunit beta' (1213 aa).

Residues Cys-60, Cys-62, Cys-75, and Cys-78 each contribute to the Zn(2+) site. Residues Asp-449, Asp-451, and Asp-453 each coordinate Mg(2+). Cys-818, Cys-892, Cys-899, and Cys-902 together coordinate Zn(2+).

It belongs to the RNA polymerase beta' chain family. The RNAP catalytic core consists of 2 alpha, 1 beta, 1 beta' and 1 omega subunit. When a sigma factor is associated with the core the holoenzyme is formed, which can initiate transcription. It depends on Mg(2+) as a cofactor. Zn(2+) serves as cofactor.

It carries out the reaction RNA(n) + a ribonucleoside 5'-triphosphate = RNA(n+1) + diphosphate. In terms of biological role, DNA-dependent RNA polymerase catalyzes the transcription of DNA into RNA using the four ribonucleoside triphosphates as substrates. In Lactiplantibacillus plantarum (strain ATCC BAA-793 / NCIMB 8826 / WCFS1) (Lactobacillus plantarum), this protein is DNA-directed RNA polymerase subunit beta'.